A 183-amino-acid chain; its full sequence is MDADSDVALDILITNVVCVFRTRCHLNLRKIALEGANVIYKRDVGKVLMKLRKPRITATIWSSGKVICTGATSEEEAKFGARRLARCLQKLGFQVIFTDFKVVNVLAVCNMPFEIRLPEFTKNNRPHASYEPELHPAVCYRIKTLRATLQIFSTGSITVTGPNVKAVASAVEQIYPFVFESRK.

Belongs to the TBP family. In terms of assembly, binds TFIIA and TFIIB. Present in the brain, heart, liver and gizzard.

It localises to the cytoplasm. It is found in the nucleus. In terms of biological role, part of a specialized transcription system that mediates the transcription of most ribosomal proteins through the 5'-TCT-3' motif which is a core promoter element at these genes. Seems to also mediate the transcription of NF1. Does not bind the TATA box. This is TATA box-binding protein-like 1 (TBPL1) from Gallus gallus (Chicken).